The chain runs to 162 residues: RxLR effector protein PITG_06094 (162 aa).

The signal sequence occupies residues 1–20 (MRLSFILAATLTGLLACATA). The RxLR-dEER signature appears at 51-91 (RFLRAYNDAEDDSEDPKNVKNTVDAKPADESEDSELSEEER). The interval 56-88 (YNDAEDDSEDPKNVKNTVDAKPADESEDSELSE) is disordered.

It belongs to the RxLR effector family.

Its subcellular location is the secreted. The protein localises to the host cytoplasm. It localises to the host nucleus. It is found in the host nucleolus. Effector that enhances P.infestans colonization of Nicotiana benthamiana leaves. This chain is RxLR effector protein PITG_06094, found in Phytophthora infestans (strain T30-4) (Potato late blight agent).